Consider the following 322-residue polypeptide: tRNA-dihydrouridine(16) synthase (322 aa).

Residues 7-9 (PME) and Gln68 contribute to the FMN site. Cys98 (proton donor) is an active-site residue. FMN-binding positions include Lys139, 200-202 (NGE), and 224-225 (CR).

Belongs to the Dus family. DusC subfamily. It depends on FMN as a cofactor.

The enzyme catalyses 5,6-dihydrouridine(16) in tRNA + NADP(+) = uridine(16) in tRNA + NADPH + H(+). It catalyses the reaction 5,6-dihydrouridine(16) in tRNA + NAD(+) = uridine(16) in tRNA + NADH + H(+). In terms of biological role, catalyzes the synthesis of 5,6-dihydrouridine (D), a modified base found in the D-loop of most tRNAs, via the reduction of the C5-C6 double bond in target uridines. Specifically modifies U16 in tRNAs. In Vibrio parahaemolyticus serotype O3:K6 (strain RIMD 2210633), this protein is tRNA-dihydrouridine(16) synthase.